The chain runs to 1714 residues: Latrophilin Cirl (1714 aa).

The Extracellular portion of the chain corresponds to 1–765 (MSSIDISGRY…LFTMFDGNMR (765 aa)). The SUEL-type lectin domain occupies 26-115 (ACEGKKLTIE…KYLEAHYQCI (90 aa)). An N-linked (GlcNAc...) asparagine glycan is attached at asparagine 143. The segment at 183-302 (PPHTVTHSTP…GSPASGNNSV (120 aa)) is disordered. The span at 186-198 (TVTHSTPSSSTVP) shows a compositional bias: low complexity. Residues 244 to 262 (PSSKLPSAGNATAPSNTRI) show a composition bias toward polar residues. N-linked (GlcNAc...) asparagine glycosylation occurs at asparagine 253. Low complexity-rich tracts occupy residues 272 to 282 (DDGTLLTTKSS) and 290 to 301 (ASNGSPASGNNS). Residues asparagine 299, asparagine 338, asparagine 395, asparagine 652, asparagine 701, and asparagine 728 are each glycosylated (N-linked (GlcNAc...) asparagine). A disordered region spans residues 373 to 397 (YDEYDDDPSSTTPAPSGGDCLHNSS). The GAIN-B domain maps to 558-752 (RSVVQKVKNI…AILMDVVDEH (195 aa)). Disulfide bonds link cysteine 707/cysteine 734 and cysteine 722/cysteine 736. A GPS region spans residues 707 to 752 (CVFWNYIDHAWSANGCSLESTNRTHSVCSCNHLTNFAILMDVVDEH). Residues 766–786 (VFIYISIAICVVFIVIALLTL) form a helical membrane-spanning segment. The Cytoplasmic portion of the chain corresponds to 787-799 (KLFNGVFVKSART). Residues 800–820 (TIYTSIYVCLLAIELLFLLGI) traverse the membrane as a helical segment. Over 821-826 (EQTETS) the chain is Extracellular. Residues 827-847 (IFCGFITVFLHCAILSGAAWF) form a helical membrane-spanning segment. The Cytoplasmic portion of the chain corresponds to 848–873 (CYEAFHSYYTLTSDELLVEVDQTPKV). Residues 874–894 (NWYYLLSYGLSVSVVAISVAI) form a helical membrane-spanning segment. Residues 895-911 (NPSTYTQNDYCVLMEAN) are Extracellular-facing. The helical transmembrane segment at 912-932 (ILFYATFVAPVLIFFVAAIGY) threads the bilayer. Residues 933 to 966 (TFLSWIIMCRKSCTGLKTKEHTRLASVRFDIRCS) lie on the Cytoplasmic side of the membrane. A helical transmembrane segment spans residues 967–987 (FVFLLLLSAVWCSAYFYLRGA). Residues 988–994 (KTDEDTT) are Extracellular-facing. The chain crosses the membrane as a helical span at residues 995–1015 (TIYGYCFICFNTLLGLYIFVF). The Cytoplasmic segment spans residues 1016–1714 (HCIQNEKIRR…VRCYLEPLAK (699 aa)). Residues serine 1155, serine 1245, and serine 1252 each carry the phosphoserine modification. 5 disordered regions span residues 1229-1253 (PNSQ…LHSR), 1268-1287 (KTKQ…LDPP), 1293-1354 (AFYQ…PPPH), 1447-1536 (GGGS…DERM), and 1551-1694 (FQRQ…QQRH). A compositionally biased stretch (low complexity) spans 1296-1315 (QQQQQMRRQQQQQQQQQQQQ). Phosphoserine occurs at positions 1317 and 1318. 2 stretches are compositionally biased toward low complexity: residues 1330 to 1348 (LHLQ…QQQL) and 1453 to 1478 (GGSV…QQQR). Composition is skewed to acidic residues over residues 1486 to 1500 (DDDD…DEAT) and 1510 to 1523 (CDDD…DLDD). Basic and acidic residues predominate over residues 1524–1536 (DAHKLPPQSDERM). Residues 1565-1580 (GALPPGVAPGAGSAGP) show a composition bias toward low complexity. Polar residues predominate over residues 1644–1659 (QTPAQKRQQLQKLSPQ). Low complexity predominate over residues 1660–1675 (STTSSSSHTSHSNLQP). Residues 1679 to 1693 (PLTHQHPHPPQHQQR) are compositionally biased toward basic residues.

It belongs to the G-protein coupled receptor 2 family. LN-TM7 subfamily. As to quaternary structure, forms a heterodimer, consisting of a large extracellular region non-covalently linked to a seven-transmembrane moiety. In terms of processing, proteolytically cleaved into 2 subunits, an extracellular subunit and a seven-transmembrane subunit.

The protein localises to the cell membrane. The protein is Latrophilin Cirl of Drosophila ananassae (Fruit fly).